We begin with the raw amino-acid sequence, 29 residues long: Protamine-like protein (29 aa).

The tract at residues 1–29 (MRSFDQGSTRAPARERCRRQRPEGRSAQR) is disordered. Residues 12-29 (PARERCRRQRPEGRSAQR) show a composition bias toward basic and acidic residues.

The polypeptide is Protamine-like protein (tpr) (Escherichia coli (strain K12)).